The chain runs to 716 residues: Penicillin-binding protein 2A (716 aa).

A helical transmembrane segment spans residues 22–42 (LNILFLAAFVIFTWIIVELGI). The active-site Acyl-ester intermediate is the serine 397. The span at 689–706 (SKQDKEGTQQKNKDKIEE) shows a compositional bias: basic and acidic residues. Residues 689 to 716 (SKQDKEGTQQKNKDKIEENAENTTSSDN) form a disordered region.

Belongs to the transpeptidase family.

The protein localises to the cell membrane. Its subcellular location is the forespore inner membrane. The catalysed reaction is Preferential cleavage: (Ac)2-L-Lys-D-Ala-|-D-Ala. Also transpeptidation of peptidyl-alanyl moieties that are N-acyl substituents of D-alanine.. It participates in cell wall biogenesis; peptidoglycan biosynthesis. Its function is as follows. Involved in the synthesis of peptidoglycan associated with cell wall elongation, especially following spore germination. Has a partially redundant function with PBP 1 (ponA) or PBP 4 (pbpD) during spore outgrowth. Plays a redundant role with PbpH in determining the rod shape of the cell during vegetative growth and spore outgrowth. This chain is Penicillin-binding protein 2A, found in Bacillus subtilis (strain 168).